The following is a 234-amino-acid chain: Leucyl/phenylalanyl-tRNA--protein transferase (234 aa).

It belongs to the L/F-transferase family.

The protein resides in the cytoplasm. It carries out the reaction N-terminal L-lysyl-[protein] + L-leucyl-tRNA(Leu) = N-terminal L-leucyl-L-lysyl-[protein] + tRNA(Leu) + H(+). The catalysed reaction is N-terminal L-arginyl-[protein] + L-leucyl-tRNA(Leu) = N-terminal L-leucyl-L-arginyl-[protein] + tRNA(Leu) + H(+). The enzyme catalyses L-phenylalanyl-tRNA(Phe) + an N-terminal L-alpha-aminoacyl-[protein] = an N-terminal L-phenylalanyl-L-alpha-aminoacyl-[protein] + tRNA(Phe). In terms of biological role, functions in the N-end rule pathway of protein degradation where it conjugates Leu, Phe and, less efficiently, Met from aminoacyl-tRNAs to the N-termini of proteins containing an N-terminal arginine or lysine. The protein is Leucyl/phenylalanyl-tRNA--protein transferase of Escherichia coli O81 (strain ED1a).